Here is a 228-residue protein sequence, read N- to C-terminus: Somatolactin (228 aa).

An N-terminal signal peptide occupies residues 1–24 (MFSIRMNKVLQGFVCLMLTHRIVG). 3 disulfides stabilise this stretch: Cys29–Cys38, Cys88–Cys200, and Cys217–Cys225. Residues Asn141 and Asn177 are each glycosylated (N-linked (GlcNAc...) asparagine).

Belongs to the somatotropin/prolactin family.

Its subcellular location is the secreted. This chain is Somatolactin, found in Anguilla anguilla (European freshwater eel).